Consider the following 63-residue polypeptide: Potassium channel toxin alpha-KTx 21.1 (63 aa).

Residues 1–27 (MQFSGVVLILISMTLVNFVFFETKVEA) form the signal peptide. Cystine bridges form between cysteine 33–cysteine 53, cysteine 38–cysteine 58, and cysteine 42–cysteine 60.

It belongs to the short scorpion toxin superfamily. Potassium channel inhibitor family. Alpha-KTx 21 subfamily. As to expression, expressed by the venom gland.

The protein resides in the secreted. In terms of biological role, reversibly and voltage-independently blocks voltage-gated potassium channels rKv1.2/KCNA2 (73%) (IC(50)=196 nM), hKv1.3/KCNA3 (50%) (IC(50)=508 nM), Shaker IR (30%), rKv1.6/KCNA6 (22%) (at 0.5 uM). Interaction of Ts15 with Kv1.3/KCNA3 is stronger than its interaction with Kv1.2/KCNA2. In Tityus serrulatus (Brazilian scorpion), this protein is Potassium channel toxin alpha-KTx 21.1.